Reading from the N-terminus, the 119-residue chain is Large ribosomal subunit protein uL22 (119 aa).

This sequence belongs to the universal ribosomal protein uL22 family. As to quaternary structure, part of the 50S ribosomal subunit.

Its function is as follows. This protein binds specifically to 23S rRNA; its binding is stimulated by other ribosomal proteins, e.g. L4, L17, and L20. It is important during the early stages of 50S assembly. It makes multiple contacts with different domains of the 23S rRNA in the assembled 50S subunit and ribosome. In terms of biological role, the globular domain of the protein is located near the polypeptide exit tunnel on the outside of the subunit, while an extended beta-hairpin is found that lines the wall of the exit tunnel in the center of the 70S ribosome. This chain is Large ribosomal subunit protein uL22, found in Rickettsia prowazekii (strain Madrid E).